The following is a 477-amino-acid chain: Bifunctional protein HldE (477 aa).

The interval 1–318 is ribokinase; sequence MKVTLPEFER…ENAVRGRADT (318 aa). Lysine 179 is subject to N6-acetyllysine. 195–198 provides a ligand contact to ATP; the sequence is NLSE. Aspartate 264 is an active-site residue. The segment at 344-477 is cytidylyltransferase; it reads MTNGVFDILH…IKKIQLDKKG (134 aa).

The protein in the N-terminal section; belongs to the carbohydrate kinase PfkB family. It in the C-terminal section; belongs to the cytidylyltransferase family. In terms of assembly, homodimer.

It carries out the reaction D-glycero-beta-D-manno-heptose 7-phosphate + ATP = D-glycero-beta-D-manno-heptose 1,7-bisphosphate + ADP + H(+). The enzyme catalyses D-glycero-beta-D-manno-heptose 1-phosphate + ATP + H(+) = ADP-D-glycero-beta-D-manno-heptose + diphosphate. The protein operates within nucleotide-sugar biosynthesis; ADP-L-glycero-beta-D-manno-heptose biosynthesis; ADP-L-glycero-beta-D-manno-heptose from D-glycero-beta-D-manno-heptose 7-phosphate: step 1/4. Its pathway is nucleotide-sugar biosynthesis; ADP-L-glycero-beta-D-manno-heptose biosynthesis; ADP-L-glycero-beta-D-manno-heptose from D-glycero-beta-D-manno-heptose 7-phosphate: step 3/4. Catalyzes the phosphorylation of D-glycero-D-manno-heptose 7-phosphate at the C-1 position to selectively form D-glycero-beta-D-manno-heptose-1,7-bisphosphate. Functionally, catalyzes the ADP transfer from ATP to D-glycero-beta-D-manno-heptose 1-phosphate, yielding ADP-D-glycero-beta-D-manno-heptose. This is Bifunctional protein HldE from Escherichia coli O81 (strain ED1a).